The chain runs to 790 residues: Probable copper-transporting ATPase SynA (790 aa).

Topologically, residues 1–105 (MPAAIVHSAD…IPPLQQQRLQ (105 aa)) are cytoplasmic. The region spanning 14-81 (TSILVEVEGM…EITGLGFRAQ (68 aa)) is the HMA domain. Cysteine 25 and cysteine 28 together coordinate Cu(+). The helical transmembrane segment at 106-127 (LAIAAFLLIVSSWGHLGHWLDH) threads the bilayer. Residues 128-136 (PLPGTDQLW) lie on the Extracellular side of the membrane. A helical transmembrane segment spans residues 137-156 (FHALLATWALLGPGRSILQA). At 157-163 (GWQGLRC) the chain is on the cytoplasmic side. A helical membrane pass occupies residues 164 to 184 (GAPNMNSLVLLGTGSAYLASL). Residues 185–198 (VALLWPQLGWVCFF) lie on the Extracellular side of the membrane. Residues 199–219 (DEPVMLLGFILLGRTLEEQAR) form a helical membrane-spanning segment. Residues 220–358 (FRSQAALQNL…KAPVQRFADA (139 aa)) are Cytoplasmic-facing. The chain crosses the membrane as a helical span at residues 359-381 (IAGRFVYGVCAIAALTFGFWATL). At 382 to 420 (GSRWWPQVLQQPLPGLLIHAPHHGMEMAHPHSHSPLLLA) the chain is on the extracellular side. Residues 421–438 (LTLAISVLVVACPCALGL) form a helical membrane-spanning segment. The Cytoplasmic segment spans residues 439 to 723 (ATPTAILVAT…NLSQMGLRTI (285 aa)). Aspartate 476 functions as the 4-aspartylphosphate intermediate in the catalytic mechanism. Mg(2+) contacts are provided by aspartate 669 and aspartate 673. Residues 724–743 (RQNLTWALGYNVVMLPLAAG) traverse the membrane as a helical segment. The Extracellular portion of the chain corresponds to 744-755 (AFLPAYGLALTP). A helical membrane pass occupies residues 756-774 (AIAGACMAVSSLAVVSNSL). Residues 775-790 (LLRYWFRRSLNHSVSV) are Cytoplasmic-facing.

This sequence belongs to the cation transport ATPase (P-type) (TC 3.A.3) family. Type IB subfamily.

It localises to the cell membrane. It catalyses the reaction Cu(+)(in) + ATP + H2O = Cu(+)(out) + ADP + phosphate + H(+). Its function is as follows. Involved in copper transport. This is Probable copper-transporting ATPase SynA (synA) from Synechococcus elongatus (strain ATCC 33912 / PCC 7942 / FACHB-805) (Anacystis nidulans R2).